A 199-amino-acid polypeptide reads, in one-letter code: Small ribosomal subunit protein uS4B (199 aa).

The S4 RNA-binding domain occupies 88-151 (CRLDNLVYRT…RKNKIFIDNF (64 aa)).

The protein belongs to the universal ribosomal protein uS4 family. In terms of assembly, part of the 30S ribosomal subunit. Contacts protein S5. The interaction surface between S4 and S5 is involved in control of translational fidelity.

Its function is as follows. One of the primary rRNA binding proteins, it binds directly to 16S rRNA where it nucleates assembly of the body of the 30S subunit. With S5 and S12 plays an important role in translational accuracy. The protein is Small ribosomal subunit protein uS4B of Alkaliphilus metalliredigens (strain QYMF).